Reading from the N-terminus, the 227-residue chain is PKHD-type hydroxylase Reut_B4660 (227 aa).

One can recognise a Fe2OG dioxygenase domain in the interval 78-178; the sequence is KVFPPLFNRY…RVSSFFWIQS (101 aa). The Fe cation site is built by His96, Asp98, and His159. A 2-oxoglutarate-binding site is contributed by Arg169.

Fe(2+) is required as a cofactor. Requires L-ascorbate as cofactor.

The polypeptide is PKHD-type hydroxylase Reut_B4660 (Cupriavidus pinatubonensis (strain JMP 134 / LMG 1197) (Cupriavidus necator (strain JMP 134))).